The sequence spans 92 residues: Small ribosomal subunit protein uS19 (92 aa).

Belongs to the universal ribosomal protein uS19 family.

Functionally, protein S19 forms a complex with S13 that binds strongly to the 16S ribosomal RNA. The chain is Small ribosomal subunit protein uS19 from Bradyrhizobium sp. (strain BTAi1 / ATCC BAA-1182).